We begin with the raw amino-acid sequence, 613 residues long: Azole resistance protein 1 (613 aa).

A disordered region spans residues 1-38 (MKGEPKTYSMSDLSYYGEKAQQQNEKQQKQYVVRRNST). Topologically, residues 1 to 70 (MKGEPKTYSM…PKGFILYASL (70 aa)) are extracellular. The chain crosses the membrane as a helical span at residues 71–91 (IALALSLFLAALDIMIVSTII). Residues 92-102 (EEVAKQFGSYS) are Cytoplasmic-facing. Residues 103–123 (EIGWLFTGYSLPNALLALIWG) form a helical membrane-spanning segment. Residues 124–134 (RIATPIGFKET) are Extracellular-facing. The helical transmembrane segment at 135-155 (MLFAIVIFEIGSLISALANSM) threads the bilayer. Residues 156-163 (SMLIGGRV) lie on the Cytoplasmic side of the membrane. The helical transmembrane segment at 164–184 (IAGVGGCGIQSLSFVIGSTLV) threads the bilayer. Residues 185–189 (EESQR) lie on the Extracellular side of the membrane. The helical transmembrane segment at 190–210 (GILIAVLSCSFAIASVVGPFL) threads the bilayer. Over 211–221 (GGVFTSSVTWR) the chain is Cytoplasmic. The chain crosses the membrane as a helical span at residues 222–242 (WCFYVNLPIGGLAFFLFLFFY). Topologically, residues 243-298 (NPGLSTFQETMDNIRKFPSQFIEIVRNVAYHLLKIKGFSKLNGWRKPFMELIFMYD) are extracellular. Residues 299 to 319 (IIEFVFCSAGFTCILLAFTFG) traverse the membrane as a helical segment. At 320–329 (GNRYAWNSAS) the chain is on the cytoplasmic side. Residues 330–350 (IIILFIIGIVLVVLAGIYDFL) form a helical membrane-spanning segment. The Extracellular portion of the chain corresponds to 351–375 (VFPKFNIVKATPHYQPLMSWTNIKK). A helical transmembrane segment spans residues 376 to 396 (PGIFTVNIALFLTCAGYISQF). The Cytoplasmic portion of the chain corresponds to 397–414 (TYIVQYFQLIYNDSAWRA). The helical transmembrane segment at 415-435 (AVHLVACIISTVVTAILCGAI) threads the bilayer. The Extracellular segment spans residues 436–443 (TDKTRQIK). A helical membrane pass occupies residues 444-464 (PIIVISSIFGVVGAGILTLLN). Residues 465-472 (NNANNSAH) are Cytoplasmic-facing. The helical transmembrane segment at 473–493 (IGLLILPGVAFGGLAQSSMLA) threads the bilayer. Residues 494 to 581 (SQIQLDKKSP…SKLGNIISES (88 aa)) lie on the Extracellular side of the membrane. The helical transmembrane segment at 582 to 602 (LTDVFYMALGFYALSLIFAVF) threads the bilayer. Topologically, residues 603–613 (ASNKKVTASLR) are cytoplasmic.

This sequence belongs to the major facilitator superfamily.

It is found in the cell membrane. In terms of biological role, transporter protein required for adaptation to high stress imposed by low-chain organic acids, in particular by acetic acid, and for resistance to azoles, especially to ketoconazole and fluconazole. In Saccharomyces cerevisiae (strain ATCC 204508 / S288c) (Baker's yeast), this protein is Azole resistance protein 1 (AZR1).